A 1037-amino-acid chain; its full sequence is Ras guanine nucleotide exchange factor E (1037 aa).

Positions 5–35 form a coiled coil; it reads ECNNRIEYLQNKVLELESLNENLKGQLEYFQ. Disordered regions lie at residues 65–100, 114–150, 166–387, 414–437, 451–472, 602–628, 907–935, and 1004–1037; these read NNNN…TTNN, TNSN…ELSN, TTTT…PLSN, TVNM…LYHS, SSLS…LTNP, INSN…NQLE, NTTT…QQLN, and EKET…SFKS. 2 stretches are compositionally biased toward low complexity: residues 114-145 and 166-200; these read TNSN…NNSN and TTTT…NNNN. Polar residues predominate over residues 229–239; sequence PTSSRNSPTNK. The span at 240 to 276 shows a compositional bias: low complexity; the sequence is SSPQFLSPLSKSPLSQSTQSTTVSSPSPSWTTTVPQS. Residues 282 to 300 are compositionally biased toward polar residues; it reads TIVQSKSPYSPDTNISNKL. Over residues 318 to 360 the composition is skewed to low complexity; that stretch reads SPSKNSPRSLNSNNNNSSATTSITTPPTTSTPTPTTSTTTTTT. The span at 361-370 shows a compositional bias: basic and acidic residues; sequence TERRPEDRRS. Polar residues-rich tracts occupy residues 372–387 and 424–437; these read TSPF…PLSN and PRSN…LYHS. The 199-residue stretch at 496–694 folds into the N-terminal Ras-GEF domain; sequence NGFIVKGGTI…NLKRLLTNDR (199 aa). The Ras-GEF domain maps to 726-1003; it reads DPTEIARQLT…YKLSLICEPK (278 aa). Low complexity predominate over residues 907-930; the sequence is NTTTTTTTTTTTTTTNTTTSNNNN. The segment covering 1027 to 1037 has biased composition (polar residues); that stretch reads SVTSLLNSFKS.

Functionally, promotes the exchange of Ras-bound GDP by GTP. Seems to play a role in chemotaxis. The polypeptide is Ras guanine nucleotide exchange factor E (gefE) (Dictyostelium discoideum (Social amoeba)).